The sequence spans 411 residues: Lissencephaly-1 homolog (411 aa).

The 33-residue stretch at 9–41 folds into the LisH domain; it reads QREELNQAIADYLGSNGYADSLETFRKEADLST. The stretch at 56 to 83 forms a coiled coil; that stretch reads TSVIRLQKKVMDLEAKLTEAEKEVIEGA. WD repeat units follow at residues 106–147, 148–187, 191–230, 233–272, 275–334, 337–376, and 379–411; these read GHRA…RSLK, GHTDSVQDVAFDAQGKLLASCSADLSIKLWDFQQSYECVK, GHDHNVSSVAFVPAGDYVLSASRDRTIKMWEVATGYCVKT, GHREWVRMVRVHIEGSIFATCSNDHTIRVWLTNSKDCKVE, DHEH…CLLT, GHDNWVRGLAFHPGGKYLVSASDDKTIRVWDLRNKRCMKT, and AHQHFCTSIDFHKAHPYVISGSVDQSVKVWECR.

The protein belongs to the WD repeat LIS1/nudF family.

The protein localises to the cytoplasm. It is found in the cytoskeleton. Its subcellular location is the microtubule organizing center. It localises to the centrosome. Positively regulates the activity of the minus-end directed microtubule motor protein dynein. May enhance dynein-mediated microtubule sliding by targeting dynein to the microtubule plus end. Required for several dynein- and microtubule-dependent processes. The protein is Lissencephaly-1 homolog of Drosophila mojavensis (Fruit fly).